The primary structure comprises 382 residues: MIOREX complex component 5 (382 aa).

The N-terminal 12 residues, 1–12 (MRRTFSQLATRL), are a transit peptide targeting the mitochondrion.

As to quaternary structure, associates with the mitochondrial ribosome.

Its subcellular location is the mitochondrion. Component of MIOREX complexes, large expressome-like assemblies of ribosomes with factors involved in all the steps of post-transcriptional gene expression. This is MIOREX complex component 5 from Saccharomyces cerevisiae (strain ATCC 204508 / S288c) (Baker's yeast).